Here is a 571-residue protein sequence, read N- to C-terminus: Streptolysin O (571 aa).

The signal sequence occupies residues Met1–Ser33. The segment at Asn30–Glu108 is disordered. Over residues Asn37–Glu48 the composition is skewed to low complexity. Basic and acidic residues-rich tracts occupy residues Pro50–Asp68 and Ala79–Glu108. A run of 4 beta stranded transmembrane segments spans residues Lys260–Ile273, Ile280–Glu289, Ser358–Ala367, and Lys375–Ser387. A Conserved undecapeptide motif is present at residues Glu529–Arg539. Residues Thr561–Leu562 carry the Cholesterol binding motif.

This sequence belongs to the cholesterol-dependent cytolysin family. As to quaternary structure, homooligomeric pore complex of 35 to 50 subunits; when inserted in the host membrane.

Its subcellular location is the secreted. The protein resides in the host cell membrane. A cholesterol-dependent toxin that causes cytolysis by forming pores in cholesterol containing host membranes. After binding to target membranes, the protein undergoes a major conformation change, leading to its insertion in the host membrane and formation of an oligomeric pore complex. Cholesterol is required for binding to host membranes, membrane insertion and pore formation; cholesterol binding is mediated by a Thr-Leu pair in the C-terminus. Can be reversibly inactivated by oxidation. The chain is Streptolysin O (slo) from Streptococcus pyogenes serotype M3 (strain ATCC BAA-595 / MGAS315).